A 182-amino-acid polypeptide reads, in one-letter code: Bifunctional dihydrofolate reductase-thymidylate synthase (182 aa).

A DHFR domain is found at 1-182 (AICACCKVLN…YFTRINNAYT (182 aa)). Residue 25-31 (GLGNAGG) coordinates NADP(+). Aspartate 40 lines the substrate pocket. Residues 93–95 (KTS) and 114–117 (LSRT) contribute to the NADP(+) site. The substrate site is built by isoleucine 154, tyrosine 160, and threonine 175. 155-162 (GGASVYKE) serves as a coordination point for NADP(+).

The protein in the N-terminal section; belongs to the dihydrofolate reductase family. It in the C-terminal section; belongs to the thymidylate synthase family. As to quaternary structure, homodimer.

The catalysed reaction is (6S)-5,6,7,8-tetrahydrofolate + NADP(+) = 7,8-dihydrofolate + NADPH + H(+). The enzyme catalyses dUMP + (6R)-5,10-methylene-5,6,7,8-tetrahydrofolate = 7,8-dihydrofolate + dTMP. The protein operates within cofactor biosynthesis; tetrahydrofolate biosynthesis; 5,6,7,8-tetrahydrofolate from 7,8-dihydrofolate: step 1/1. In terms of biological role, bifunctional enzyme. Involved in de novo dTMP biosynthesis. Key enzyme in folate metabolism. Catalyzes an essential reaction for de novo glycine and purine synthesis, DNA precursor synthesis, and for the conversion of dUMP to dTMP. This chain is Bifunctional dihydrofolate reductase-thymidylate synthase, found in Plasmodium vinckei.